We begin with the raw amino-acid sequence, 264 residues long: Tropomyosin Cha f 1.0101 (264 aa).

Met-1 carries the N-acetylmethionine modification. Disordered stretches follow at residues 1 to 56 (MDAI…VENE) and 92 to 126 (IQLPEEDLERSEERLNTATTKLAEASQAADESERM). Positions 1 to 264 (MDAIKKKMQA…RLEDELVNEK (264 aa)) form a coiled coil. Residues 12 to 45 (KLEKDNAMDRADTLEQQNKEANLRAEKTEEEIRA) show a composition bias toward basic and acidic residues.

It belongs to the tropomyosin family. Homodimer. In terms of tissue distribution, expressed in muscle (at protein level). Expressed in claw muscles.

In terms of biological role, tropomyosin, in association with the troponin complex, plays a central role in the calcium dependent regulation of muscle contraction. This Charybdis feriata (Crucifix crab) protein is Tropomyosin Cha f 1.0101.